The sequence spans 551 residues: HTH-type transcriptional regulator SgrR (551 aa).

The HTH marR-type domain maps to 1 to 116; sequence MPSARLQQQF…LVSHLGRSFR (116 aa). The H-T-H motif DNA-binding region spans 26–49; it reads LNELAALLSCSRRHMRTLLNTMQD. Residues 163-492 form a solute-binding region; the sequence is ELEADIAHHW…IDWQADAARW (330 aa).

Activates the small RNA gene sgrS under glucose-phosphate stress conditions as well as yfdZ. Represses its own transcription under both stress and non-stress conditions. Might act as a sensor of the intracellular accumulation of phosphoglucose by binding these molecules in its C-terminal solute-binding domain. This Shigella boydii serotype 4 (strain Sb227) protein is HTH-type transcriptional regulator SgrR.